A 197-amino-acid chain; its full sequence is Imidazoleglycerol-phosphate dehydratase (197 aa).

The protein belongs to the imidazoleglycerol-phosphate dehydratase family.

The protein localises to the cytoplasm. The catalysed reaction is D-erythro-1-(imidazol-4-yl)glycerol 3-phosphate = 3-(imidazol-4-yl)-2-oxopropyl phosphate + H2O. It participates in amino-acid biosynthesis; L-histidine biosynthesis; L-histidine from 5-phospho-alpha-D-ribose 1-diphosphate: step 6/9. This chain is Imidazoleglycerol-phosphate dehydratase, found in Streptomyces avermitilis (strain ATCC 31267 / DSM 46492 / JCM 5070 / NBRC 14893 / NCIMB 12804 / NRRL 8165 / MA-4680).